The primary structure comprises 289 residues: Phosphatidylinositol:ceramide inositolphosphotransferase 3 (289 aa).

5 helical membrane passes run 33-53, 77-97, 115-135, 169-189, and 199-219; these read LVLA…GVHY, AFFS…WTFH, VFVY…ATQL, VIYG…LVFV, and RWIK…IIAS. His181 is an active-site residue. Catalysis depends on residues His222 and Asp226. The helical transmembrane segment at 223–243 threads the bilayer; it reads YTVDIVVAWYTVNLVMFYVDS. A disordered region spans residues 249–289; it reads AERSSGPSPTPLLPLSTKDSKNKSKEDHQRLLNENNVADDH. The span at 266–279 shows a compositional bias: basic and acidic residues; the sequence is KDSKNKSKEDHQRL. Residues 280–289 are compositionally biased toward polar residues; it reads LNENNVADDH.

Belongs to the sphingomyelin synthase family. Mostly expressed in stems and flowers, and, to a lower extent, in leaves, roots and siliques.

It localises to the membrane. Catalyzes the transfer of the phosphorylinositol group from phosphatidylinositol (PI) to phytoceramide, an essential step in sphingolipid biosynthesis. The polypeptide is Phosphatidylinositol:ceramide inositolphosphotransferase 3 (IPCS3) (Arabidopsis thaliana (Mouse-ear cress)).